The sequence spans 122 residues: MIQQESRLRVADNTGAREILCIRVLGGSTRRFAGIGDVIVATVKEATPGGNVKAGDIVKAVIVRAKKETRRPDGSYIRFDENAAVLIRNDNEPRGTRIFGPVARELRDKKFMKIVSLAPEVL.

The protein belongs to the universal ribosomal protein uL14 family. In terms of assembly, part of the 50S ribosomal subunit. Forms a cluster with proteins L3 and L19. In the 70S ribosome, L14 and L19 interact and together make contacts with the 16S rRNA in bridges B5 and B8.

Binds to 23S rRNA. Forms part of two intersubunit bridges in the 70S ribosome. This Corynebacterium kroppenstedtii (strain DSM 44385 / JCM 11950 / CIP 105744 / CCUG 35717) protein is Large ribosomal subunit protein uL14.